The chain runs to 195 residues: Nucleoside triphosphate pyrophosphatase (195 aa).

D70 serves as the catalytic Proton acceptor.

The protein belongs to the Maf family. A divalent metal cation serves as cofactor.

Its subcellular location is the cytoplasm. The catalysed reaction is a ribonucleoside 5'-triphosphate + H2O = a ribonucleoside 5'-phosphate + diphosphate + H(+). The enzyme catalyses a 2'-deoxyribonucleoside 5'-triphosphate + H2O = a 2'-deoxyribonucleoside 5'-phosphate + diphosphate + H(+). Nucleoside triphosphate pyrophosphatase. May have a dual role in cell division arrest and in preventing the incorporation of modified nucleotides into cellular nucleic acids. The sequence is that of Nucleoside triphosphate pyrophosphatase from Cyanothece sp. (strain PCC 7425 / ATCC 29141).